The primary structure comprises 18141 residues: Titin (18141 aa).

Low complexity predominate over residues 1–31 (MQRQNPNPYQQQNQQHQQVQQFSSQEYSHSS). Positions 1–69 (MQRQNPNPYQ…QHHGGSIGGA (69 aa)) are disordered. Basic and acidic residues predominate over residues 32 to 47 (QEQHQEQRISRTEQHV). The span at 48–62 (QRSQVTTQRQVQQHH) shows a compositional bias: low complexity. Ig-like domains lie at 86 to 177 (PPVF…VYIQ), 255 to 343 (PQIS…AVLA), 372 to 461 (PAFV…AQLN), 471 to 559 (PQFV…ARLY), 618 to 708 (PQFI…AILS), 751 to 842 (PQFI…SSIR), 890 to 981 (PQFK…AQLT), 1024 to 1115 (PRFL…ATMI), 1158 to 1249 (PVFV…ACVR), 1291 to 1381 (PQFT…CSVR), 1424 to 1515 (PRFL…VELQ), 1558 to 1643 (PVFT…EAIT), 1691 to 1781 (PVFT…ASLI), 1824 to 1917 (PVFV…LNVT), 1958 to 2050 (PQFG…VNVT), 2089 to 2180 (PIFL…CNVR), and 2222 to 2313 (PHFT…TNLR). The tract at residues 236–266 (EQDSQLSQELDRNQGPAQAPQISQKPRSSKL) is disordered. A disulfide bond links cysteine 393 and cysteine 445. Cystine bridges form between cysteine 1312-cysteine 1365, cysteine 1446-cysteine 1499, and cysteine 1579-cysteine 1632. A disulfide bridge connects residues cysteine 1846 and cysteine 1899. Cysteine 2111 and cysteine 2164 are disulfide-bonded. The segment covering 2338–2347 (STAPHQRQEP) has biased composition (basic and acidic residues). The segment at 2338 to 2357 (STAPHQRQEPETPGTRQRPV) is disordered. 3 Ig-like domains span residues 2356-2449 (PVFT…MRVV), 2488-2581 (PIFT…MKVK), and 2622-2715 (PVFT…LKIE). The tract at residues 2731-2750 (PRIGELEAPKEGRPEAPEPT) is disordered. Residues 2734–2746 (GELEAPKEGRPEA) show a composition bias toward basic and acidic residues. 9 Ig-like domains span residues 2754-2844 (PVFI…GTLK), 2891-2983 (PPVW…TTIF), 3029-3116 (PRFT…AEIS), 3130-3221 (PRFT…TTLN), 3263-3354 (PKFI…ASLK), 3401-3494 (PVFT…MKIQ), 3539-3625 (PEFI…ATVS), 3676-3767 (PKFT…AKVT), and 3811-3901 (PKFT…ATVS). Cysteine 2775 and cysteine 2828 are joined by a disulfide. The cysteines at positions 3152 and 3205 are disulfide-linked. Cystine bridges form between cysteine 3560–cysteine 3613, cysteine 3698–cysteine 3751, and cysteine 3832–cysteine 3885. The stretch at 3910–3944 (LQNQVPRGMKRSDALTQMEATIKKYTSEVHLTEDD) is one TPR 1 repeat. Ig-like domains follow at residues 3954-4047 (PRFV…IKVS) and 4092-4181 (PVFV…LKVV). Cysteine 3976 and cysteine 4029 are oxidised to a cystine. Residues 4204-4229 (AAYQKERQENELEKVFDERKQVLSEQ) adopt a coiled-coil conformation. Disordered stretches follow at residues 4226-4254 (LSEQ…DWQQ) and 4299-4336 (SSQA…PSES). The span at 4309–4322 (YEENLQEKTSTTEV) shows a compositional bias: polar residues. 4 Ig-like domains span residues 4394–4482 (PVFT…ANLV), 4497–4585 (PSFV…GDCI), 4604–4692 (PHIV…AQLK), and 4703–4791 (PTIT…AKLT). The stretch at 4403 to 4438 (CRVFENEQAKFEVEFEGEPNPTVKWYRESFPIQNSP) is one TPR 2 repeat. A disulfide bridge connects residues cysteine 4625 and cysteine 4676. Disordered stretches follow at residues 4803–4891 (RTID…DKGV), 5318–5368 (DELV…QPEP), 5413–5648 (RVIP…EVDA), 5667–5701 (IKKT…VPQK), 5718–5748 (KKTK…EVVQ), 5775–5982 (KEEE…QRLL), 6034–6350 (KRVK…MPVD), and 6364–6393 (EEEV…EASV). Residues 4822–4841 (PESPHAFQPGQQPGQQFGQF) are compositionally biased toward low complexity. Positions 4852 to 4863 (GRSRQKKPKVRS) are enriched in basic residues. Basic and acidic residues-rich tracts occupy residues 5344 to 5357 (QPQE…HDEL), 5436 to 5447 (RPKEAVKAEEIQ), 5541 to 5552 (QKPDEQKQELPK), 5591 to 5621 (IEEK…EKPE), and 5633 to 5645 (PKSE…HPDE). The TPR 3 repeat unit spans residues 5575 to 5613 (PVLWERKKKKPQPQDVIEEKLDVAPTKTYEKAVDVLPDE). Residues 5681–5697 (EELFEEQPEEEISPEEE) are compositionally biased toward acidic residues. 2 stretches are compositionally biased toward acidic residues: residues 5779–5792 (IPTE…ETAE) and 5818–5860 (DVEE…QDEI). A compositionally biased stretch (basic residues) spans 5865 to 5874 (RKVKKAKKPK). Over residues 5883–5904 (EIEEDQPEEEVLQEEIIGEQEE) the composition is skewed to acidic residues. The segment covering 5910–5920 (RKVKSIKKPKK) has biased composition (basic residues). The segment covering 5921 to 5971 (VVTEKTVDQTEQPEKPEESQAEEVKETVTEEPKKPKPAPEEAKVEQVEKIS) has biased composition (basic and acidic residues). Residues 6034–6043 (KRVKKKKPKT) are compositionally biased toward basic residues. A compositionally biased stretch (acidic residues) spans 6049-6079 (ESTEEPAEETEEFEEEATQPEEVQPVEEIPE). Basic and acidic residues-rich tracts occupy residues 6081-6092 (PQVKEVADERKT), 6099-6133 (RKEE…EVRL), 6141-6169 (IKPE…EEKR), 6195-6209 (EAEH…KPEE), 6217-6234 (KRGE…EKKW), and 6259-6268 (PIEEQQKPEK). Residues 6281–6290 (PESEEEELEL) show a composition bias toward acidic residues. Positions 6291 to 6306 (EPLKLPEDKKPKEPKA) are enriched in basic and acidic residues. A compositionally biased stretch (basic residues) spans 6307–6318 (KKEKKKKPKLKK). 2 stretches are compositionally biased toward acidic residues: residues 6325–6349 (EVSE…EMPV) and 6364–6373 (EEEVVPTEET). Ig-like domains follow at residues 6536–6624 (PRIT…TNII), 6633–6728 (PQFT…NILS), 6741–6830 (PTVT…VVVS), 6841–6929 (PRFI…ATVN), 6942–7034 (PRFV…VKIQ), 7066–7151 (PKII…VAVT), and 7189–7279 (PSLL…FDIS). A disulfide bridge links cysteine 6557 with cysteine 6608. The cysteines at positions 6964 and 7016 are disulfide-linked. Residues 7621–7663 (KIQVQTKQIAQMNTKIKKHKKHKQQEQEVSETTIQCEQKETLA) adopt a coiled-coil conformation. Disordered regions lie at residues 7773-7793 (AKTA…VKAQ), 9414-9440 (EEDD…EEIQ), 9485-9510 (EEDD…PEEI), 9556-9582 (EEDD…EEIQ), 9627-9652 (EEDD…PEEI), 9698-9724 (EEDD…EEIQ), 9769-9796 (EEDD…EIQE), 9838-9865 (TAEE…PEEI), 9911-9937 (EEDD…EEIQ), 9982-10008 (EEDD…EEIQ), 10053-10080 (EEDD…EIQE), 10125-10149 (ENDK…PEEI), 10195-10220 (EEDD…PEEI), 10266-10291 (EEDD…PEEI), 10337-10364 (EEDD…EIQE), 10408-10433 (EEDD…PEEI), 10479-10504 (EEDD…PEEI), 10550-10576 (EEDD…EEIQ), 10621-10648 (EEDD…EIQE), 10692-10717 (EEDD…PEEI), 10763-10788 (EEDD…PEEI), 10834-10860 (EEDD…EEIQ), 10905-10932 (EEDD…EIQE), 11047-11073 (EEDD…EEIQ), 11118-11143 (EEDD…PEEI), 11189-11216 (EEDD…EIQE), 11260-11286 (EEDD…EEIQ), 11679-11703 (EELD…RGPD), and 11767-11795 (TEPE…LETP). Over residues 7774 to 7783 (KTAESSKELP) the composition is skewed to basic and acidic residues. Composition is skewed to acidic residues over residues 9429-9440 (VPYEEEKPEEIQ), 9500-9510 (VPYEEEKPEEI), 9571-9582 (VPYEEEKPEEIQ), 9642-9652 (VPYEEEKPEEI), 9713-9724 (VPYEEEKPEEIQ), 9784-9796 (VPYE…EIQE), 9855-9865 (VPYEEEKPEEI), 9926-9937 (VPYEEEKPEEIQ), 9997-10008 (VPYEEEKPEEIQ), 10068-10080 (VPYE…EIQE), 10139-10149 (VPYEEEKPEEI), 10210-10220 (VPYEEEKPEEI), 10281-10291 (VPYEEEKPEEI), 10352-10364 (VPYE…EIQE), 10423-10433 (VPYEEEKPEEI), 10494-10504 (VPYEEEKPEEI), 10565-10576 (VPYEEEKPEEIQ), 10636-10648 (VPYE…EIQE), 10707-10717 (VPYEEEKPEEI), 10778-10788 (VPYEEEKPEEI), 10849-10860 (VPYEEEKPEEIQ), 10920-10932 (VPYE…EIQE), 11062-11073 (VPYEEEKPEEIQ), 11133-11143 (VPYEEEKPEEI), 11204-11216 (VPYE…EIQE), and 11275-11286 (VPYEEEKPEEIQ). Basic residues predominate over residues 11686–11699 (KPKKKTTKTRTFKK). Over residues 11780–11792 (PTKDKTPKQKKTL) the composition is skewed to basic and acidic residues. A TPR 4 repeat occupies 11872–11905 (KTVLQPYQRTEMELPQRARRDSSFKQPVKLTPMK). Disordered stretches follow at residues 12003–12201 (FKHS…ADTK), 12451–12471 (TLQV…KKPE), 12685–12767 (TVDD…LPGP), 12943–12971 (IDHE…KEKS), 13131–13154 (IKKK…ETRP), 13325–13349 (QSFE…KPKK), 13471–13492 (EEYE…KSHN), 13554–13576 (EADK…PLKK), 13702–13792 (KVQK…KSPD), 13891–13914 (EEVQ…KAKK), 13951–13994 (MKRK…DEPK), 14073–14094 (TTVP…RTKK), 14109–14322 (EEEA…QVTT), 14354–14377 (EYEP…RKVK), 14414–14448 (PLDS…ETPV), 14533–14566 (EPEI…KVKK), 14583–14720 (KVDL…SELP), and 14756–14789 (VEES…KSKK). 6 stretches are compositionally biased toward basic and acidic residues: residues 12022–12035 (ESDH…ELLH), 12044–12054 (EKIETPDESRK), 12124–12134 (MERTSDIREES), 12183–12201 (LNLR…ADTK), 12457–12471 (TEHE…KKPE), and 12685–12709 (TVDD…KISE). Residues 12731–12741 (HDEDLQTDEYS) show a composition bias toward acidic residues. Residues 12750–12760 (KSKKKSTKKQK) are compositionally biased toward basic residues. The segment covering 13141–13154 (GPKEQVFEITETRP) has biased composition (basic and acidic residues). Residues 13482–13492 (KKPKKKVKSHN) show a composition bias toward basic residues. The TPR 5 repeat unit spans residues 13566 to 13599 (QPIKKEKPLKKKKDVEYPVSLEAFDHTVKVVSEP). Basic and acidic residues predominate over residues 13733-13747 (LVKEDLDQPIERALE). Residues 13771-13781 (PKPKKISKPKS) show a composition bias toward basic residues. 2 stretches are compositionally biased toward basic and acidic residues: residues 13893–13906 (VQEK…EKKA) and 13975–13984 (EDKPVEKISE). The span at 14221 to 14240 (TVEKPLEALHTDSDLEKPDV) shows a compositional bias: basic and acidic residues. The segment covering 14264–14274 (KISSEQPKQPS) has biased composition (low complexity). Over residues 14282–14294 (VTEHDLKPEEEKP) the composition is skewed to basic and acidic residues. Residues 14542–14554 (IEEHPEQSKEKLA) are compositionally biased toward basic and acidic residues. Residues 14555–14564 (PKPKKTVRKV) show a composition bias toward basic residues. The segment covering 14583–14599 (KVDLEKYEKVEMPEKPV) has biased composition (basic and acidic residues). Low complexity predominate over residues 14652–14662 (ETTVDTTDIPE). Residues 14664–14683 (TPTQTAQPEDTATAQITPSA) are compositionally biased toward polar residues. Over residues 14684-14697 (QEEKSTQDDTKDTI) the composition is skewed to basic and acidic residues. The segment covering 14756–14771 (VEESQPIVEEVEDEEP) has biased composition (acidic residues). One copy of the TPR 6 repeat lies at 14904 to 14936 (IPKTTDIGAIKDNGELSRNIEEAEEILKFKPHK). 8 disordered regions span residues 14956 to 15208 (EKYI…VSVK), 15301 to 15329 (TRKK…IQPD), 15425 to 15448 (ISET…ETPK), 15578 to 15597 (IRVS…QFTV), 15697 to 15722 (EKPA…PKPE), 15825 to 15876 (EEPK…VEEP), 15951 to 15973 (ESQP…KAPI), and 16181 to 16206 (QEEE…KPLQ). Basic and acidic residues-rich tracts occupy residues 14967–14989 (EKTP…DVKL), 15024–15046 (ELKQ…KDGE), 15069–15080 (QIEHPEIPEKVK), 15088–15097 (KPKDKSKSEP), 15109–15139 (PKEE…EIKL), 15169–15179 (IEDKAIDDEKK), 15189–15198 (QPKEQEIAKE), 15316–15325 (VTLKEPKEEQ), 15425–15437 (ISET…KPIE), and 15578–15589 (IRVSESEPKPEE). The segment covering 15703 to 15716 (IVEEEEPVVTEPIE) has biased composition (acidic residues). The segment covering 15951-15964 (ESQPEAVEDKEVSL) has biased composition (basic and acidic residues). Positions 16183–16193 (EEYEEGEDIEE) are enriched in acidic residues. The SH3 domain maps to 16409–16470 (ENLNIMYSIC…PAQYLMEPEE (62 aa)). Ig-like domains lie at 16501–16590 (PRFI…TELI), 16625–16719 (PTFS…ITLK), 16728–16811 (PQIL…ANLT), 16822–16916 (PPLF…VEVD), 16919–17001 (TFTK…STVE), 17007–17091 (PDFI…CELV), 17097–17180 (PEIV…AKLT), 17184–17270 (PLVD…TKLC), and 17277–17363 (PPVI…AEAS). Cysteine 16940 and cysteine 16989 are oxidised to a cystine. The Fibronectin type-III 1 domain maps to 17374 to 17467 (APGTPQPLEI…LSPPIRLVPK (94 aa)). 2 Ig-like domains span residues 17473 to 17558 (PSVQ…CRLK) and 17563 to 17653 (PVLE…CTVQ). A disulfide bond links cysteine 17494 and cysteine 17542. Fibronectin type-III domains lie at 17660-17755 (RPQS…TKKF), 17760-17861 (PPRG…TPPS), 17862-17958 (PPQN…THAS), and 17982-18078 (PPTG…AMTA). One copy of the TPR 7 repeat lies at 17694-17728 (LEKCDVQNNVWMKVSDFNKDIKSYAVQKLSMNAQY). The segment at 17741–17771 (SEPTESDPVTITKKFEKPSPPRGPTTVSGMN) is disordered.

It belongs to the protein kinase superfamily. CAMK Ser/Thr protein kinase family. In terms of assembly, interacts with Msp300; this interaction mediates the recruitment of Msp300 to the Z-disks. In terms of tissue distribution, expressed in the mesoderm at stage 11, several hours before myoblast fusion, and persists in most muscle cells, somatic, visceral and pharyngeal muscles and their precursors, until the third instar. Isoform A: Expressed in the indirect flight muscle (at protein level).

It is found in the cytoplasm. The protein localises to the nucleus. It localises to the chromosome. The protein resides in the myofibril. Its subcellular location is the sarcomere. It is found in the z line. Key component in the assembly and functioning of adult and embryonic striated muscles and muscle tendons. By providing connections at the level of individual microfilaments, it contributes to the fine balance of forces between the two halves of the sarcomere. The size and extensibility of the cross-links are the main determinants of sarcomere extensibility properties of muscle. In non-muscle cells, seems to play a role in chromosome condensation and chromosome segregation during mitosis. Might link the lamina network to chromatin or nuclear actin, or both during interphase. This Drosophila melanogaster (Fruit fly) protein is Titin (sls).